A 235-amino-acid polypeptide reads, in one-letter code: Homeobox-leucine zipper protein ATHB-12 (235 aa).

A DNA-binding region (homeobox) is located at residues 27–86 (KSNNQKRFSEEQIKSLELIFESETRLEPRKKVQVARELGLQPRQVAIWFQNKRARWKTKQ). A leucine-zipper region spans residues 87 to 122 (LEKEYNTLRANYNNLASQFEIMKKEKQSLVSELQRL). 2 stretches are compositionally biased toward basic and acidic residues: residues 128 to 138 (RPKEEKHHECC) and 152 to 162 (HNGKSEPEGRL). The interval 128–167 (RPKEEKHHECCGDQGLALSSSTESHNGKSEPEGRLDQGSV) is disordered.

It belongs to the HD-ZIP homeobox family. Class I subfamily. As to quaternary structure, interacts with TFIIB1. In terms of tissue distribution, widely expressed.

The protein resides in the nucleus. In terms of biological role, probable transcription activator that may act as growth regulators in response to water deficit. In Arabidopsis thaliana (Mouse-ear cress), this protein is Homeobox-leucine zipper protein ATHB-12 (ATHB-12).